A 320-amino-acid chain; its full sequence is tRNA-cytidine(32) 2-sulfurtransferase (320 aa).

The PP-loop motif signature appears at 54–59 (SGGKDS). Residues C129, C132, and C220 each contribute to the [4Fe-4S] cluster site.

Belongs to the TtcA family. In terms of assembly, homodimer. The cofactor is Mg(2+). It depends on [4Fe-4S] cluster as a cofactor.

The protein localises to the cytoplasm. The enzyme catalyses cytidine(32) in tRNA + S-sulfanyl-L-cysteinyl-[cysteine desulfurase] + AH2 + ATP = 2-thiocytidine(32) in tRNA + L-cysteinyl-[cysteine desulfurase] + A + AMP + diphosphate + H(+). Its pathway is tRNA modification. Its function is as follows. Catalyzes the ATP-dependent 2-thiolation of cytidine in position 32 of tRNA, to form 2-thiocytidine (s(2)C32). The sulfur atoms are provided by the cysteine/cysteine desulfurase (IscS) system. In Bordetella pertussis (strain Tohama I / ATCC BAA-589 / NCTC 13251), this protein is tRNA-cytidine(32) 2-sulfurtransferase.